An 87-amino-acid polypeptide reads, in one-letter code: UPF0250 protein plu1293 (87 aa).

The protein belongs to the UPF0250 family.

This Photorhabdus laumondii subsp. laumondii (strain DSM 15139 / CIP 105565 / TT01) (Photorhabdus luminescens subsp. laumondii) protein is UPF0250 protein plu1293.